The following is a 429-amino-acid chain: Enolase (429 aa).

Residue Gln163 participates in (2R)-2-phosphoglycerate binding. The active-site Proton donor is the Glu205. Asp242, Glu285, and Asp312 together coordinate Mg(2+). Positions 337, 366, 367, and 388 each coordinate (2R)-2-phosphoglycerate. Catalysis depends on Lys337, which acts as the Proton acceptor.

This sequence belongs to the enolase family. The cofactor is Mg(2+).

It is found in the cytoplasm. It localises to the secreted. The protein resides in the cell surface. The enzyme catalyses (2R)-2-phosphoglycerate = phosphoenolpyruvate + H2O. It participates in carbohydrate degradation; glycolysis; pyruvate from D-glyceraldehyde 3-phosphate: step 4/5. Catalyzes the reversible conversion of 2-phosphoglycerate (2-PG) into phosphoenolpyruvate (PEP). It is essential for the degradation of carbohydrates via glycolysis. This Azoarcus sp. (strain BH72) protein is Enolase.